A 230-amino-acid polypeptide reads, in one-letter code: Protein UPS2, mitochondrial (230 aa).

The PRELI/MSF1 domain occupies 1 to 175; the sequence is MKLFQNSYDF…VLQVFSENWE (175 aa).

It belongs to the slowmo family. In terms of assembly, interacts with MDM35.

It localises to the mitochondrion inner membrane. The protein resides in the mitochondrion intermembrane space. Its function is as follows. Required for mitochondrial cristae morphogenesis and MGM1-processing. Controls the stability of mitochondrial phosphatidylethanolamine (PE). With UPS1, controls the level of cardiolipin in mitochondria. Cardiolipin is a unique phospholipid with four fatty acid chains and is present mainly in the mitochondrial inner membrane where it stabilizes the electron transport chain supercomplex between complexes III and IV through direct interaction of their subunits. This is Protein UPS2, mitochondrial (UPS2) from Saccharomyces cerevisiae (strain ATCC 204508 / S288c) (Baker's yeast).